Consider the following 138-residue polypeptide: Ostreolysin A6 (138 aa).

The protein belongs to the aegerolysin family. In terms of assembly, monomer.

Has hemolytic activity against bovine erythrocytes at nanomolar concentrations in vitro. Promotes active pleurotolysin B (PlyB)-dependent permeabilization of membranes rich in cholesterol and sphingomyelin. May play an important role in the initial phase of fungal fruiting. The polypeptide is Ostreolysin A6 (OlyA6) (Pleurotus ostreatus (Oyster mushroom)).